The chain runs to 94 residues: MLKPLGDRVVIEAISKDEMTASGIVLPDSAKEKPQEGRVIAVGSGRVADNGERIALEVKDGDKVIFSKYAGTEVKVDNKEYLVLRESDILAIIG.

Belongs to the GroES chaperonin family. As to quaternary structure, heptamer of 7 subunits arranged in a ring. Interacts with the chaperonin GroEL.

It localises to the cytoplasm. In terms of biological role, together with the chaperonin GroEL, plays an essential role in assisting protein folding. The GroEL-GroES system forms a nano-cage that allows encapsulation of the non-native substrate proteins and provides a physical environment optimized to promote and accelerate protein folding. GroES binds to the apical surface of the GroEL ring, thereby capping the opening of the GroEL channel. This is Co-chaperonin GroES from Brevibacillus choshinensis.